We begin with the raw amino-acid sequence, 176 residues long: WASH complex subunit 3 (176 aa).

A coiled-coil region spans residues 47–74; that stretch reads ETKFVEMERQLQKTEAALIILEAKLASI. Disordered stretches follow at residues 84–123 and 152–176; these read ATEA…PESV and KMQS…GQRE. Positions 104–115 are enriched in low complexity; sequence TTEPPTTENPTE.

This sequence belongs to the CCDC53 family. As to quaternary structure, component of the WASH complex.

The protein localises to the early endosome. In terms of biological role, acts at least in part as component of the WASH complex which may regulate wash nucleation-promoting factor (NPF) activity and is required for its membrane targeting during endosomal sorting. During embryogenesis, not involved in the wash-dependent developmental migration of hemocytes anteriorly from the tail. The chain is WASH complex subunit 3 from Drosophila melanogaster (Fruit fly).